Reading from the N-terminus, the 54-residue chain is IVTVDCSDYPKPVCTLDYMPLCGSDNKTYSNKCNFCNAVVDSNGTITLSHFGRC.

Positions 4-54 constitute a Kazal-like domain; the sequence is VDCSDYPKPVCTLDYMPLCGSDNKTYSNKCNFCNAVVDSNGTITLSHFGRC. 3 cysteine pairs are disulfide-bonded: C6/C36, C14/C33, and C22/C54. N-linked (GlcNAc...) asparagine glycosylation occurs at N43.

It localises to the secreted. This Coloeus monedula (Eurasian jackdaw) protein is Ovomucoid.